A 1294-amino-acid chain; its full sequence is Disease resistance protein L6 (1294 aa).

Residues 1 to 29 (MSYLREVATAVALLLPFILLNKFWRPNSK) form the signal peptide. A disordered region spans residues 34-54 (NDDDDSTSEVDAISDSTNPSG). One can recognise a TIR domain in the interval 59–221 (VEYEVFLSFR…AIADKVSADI (163 aa)). Residues 68–73 (RGPDTR) and glycine 101 contribute to the NAD(+) site. Residue glutamate 135 is part of the active site. The NB-ARC domain occupies 241-480 (DDHITAVLEK…VYDRLKISYD (240 aa)). LRR repeat units lie at residues 246-268 (AVLE…GMGG), 468-492 (LDEV…IFLD), 604-625 (LSEL…NNLL), 626-650 (PNLK…NYTM), 904-928 (LENL…GLQG), 1012-1039 (FPML…SLEE), 1063-1085 (LQKL…LEEL), 1086-1109 (KSLQ…KLKE), 1179-1203 (LEEL…SFLS), 1205-1229 (LQKL…ELKS), and 1254-1278 (LKNL…ALKT).

Belongs to the disease resistance TIR-NB-LRR family. Homooligomer; homooligomerization is required for activity.

It catalyses the reaction NAD(+) + H2O = ADP-D-ribose + nicotinamide + H(+). It carries out the reaction NADP(+) + H2O = ADP-D-ribose 2'-phosphate + nicotinamide + H(+). The enzyme catalyses NAD(+) = 2'cADPR + nicotinamide + H(+). Functionally, TIR-NB-LRR receptor-like protein that confers resistance to the flax rust phytopathogenic fungus (M.lini). An NAD(+) hydrolase (NADase): in response to activation, catalyzes cleavage of NAD(+) into ADP-D-ribose (ADPR) and nicotinamide; NAD(+) cleavage triggering a defense system that promotes cell death. Also able to hydrolyze NADP(+), but not other NAD(+)-related molecules. Makes small amounts of 2' cyclic ADPR (2'cADPR). This is Disease resistance protein L6 from Linum usitatissimum (Flax).